The primary structure comprises 576 residues: Arginine--tRNA ligase (576 aa).

The short motif at 122 to 132 (PNVAKQMHVGH) is the 'HIGH' region element.

This sequence belongs to the class-I aminoacyl-tRNA synthetase family. Monomer.

It is found in the cytoplasm. The catalysed reaction is tRNA(Arg) + L-arginine + ATP = L-arginyl-tRNA(Arg) + AMP + diphosphate. This is Arginine--tRNA ligase from Yersinia enterocolitica serotype O:8 / biotype 1B (strain NCTC 13174 / 8081).